A 547-amino-acid polypeptide reads, in one-letter code: 2-succinyl-5-enolpyruvyl-6-hydroxy-3-cyclohexene-1-carboxylate synthase (547 aa).

This sequence belongs to the TPP enzyme family. MenD subfamily. As to quaternary structure, homodimer. The cofactor is Mg(2+). It depends on Mn(2+) as a cofactor. Requires thiamine diphosphate as cofactor.

It catalyses the reaction isochorismate + 2-oxoglutarate + H(+) = 5-enolpyruvoyl-6-hydroxy-2-succinyl-cyclohex-3-ene-1-carboxylate + CO2. The protein operates within quinol/quinone metabolism; 1,4-dihydroxy-2-naphthoate biosynthesis; 1,4-dihydroxy-2-naphthoate from chorismate: step 2/7. It functions in the pathway quinol/quinone metabolism; menaquinone biosynthesis. Functionally, catalyzes the thiamine diphosphate-dependent decarboxylation of 2-oxoglutarate and the subsequent addition of the resulting succinic semialdehyde-thiamine pyrophosphate anion to isochorismate to yield 2-succinyl-5-enolpyruvyl-6-hydroxy-3-cyclohexene-1-carboxylate (SEPHCHC). The protein is 2-succinyl-5-enolpyruvyl-6-hydroxy-3-cyclohexene-1-carboxylate synthase of Mycobacterium sp. (strain KMS).